The sequence spans 415 residues: Multidrug resistance protein MdtA (415 aa).

Residues 1-21 form the signal peptide; sequence MKGSYKSRWVIVIVVVIAAIA. The span at 31–47 shows a compositional bias: polar residues; it reads DSQSAAPGATKQAQQSP. Disordered stretches follow at residues 31–60 and 392–415; these read DSQS…GPLA and EAQS…GARS. Basic and acidic residues predominate over residues 399 to 415; sequence PEEKATSREYAKKGARS.

The protein belongs to the membrane fusion protein (MFP) (TC 8.A.1) family. Part of a tripartite efflux system composed of MdtA, MdtB and MdtC.

The protein resides in the cell inner membrane. Functionally, the MdtABC tripartite complex confers resistance against novobiocin and deoxycholate. The sequence is that of Multidrug resistance protein MdtA from Escherichia coli O157:H7.